Consider the following 275-residue polypeptide: Autophagy protein 5 (275 aa).

Position 1 is an N-acetylmethionine (Met-1). Lys-130 is covalently cross-linked (Glycyl lysine isopeptide (Lys-Gly) (interchain with G-Cter in ATG12)).

The protein belongs to the ATG5 family. In terms of assembly, forms a conjugate with ATG12. Part of the minor complex composed of 4 sets of ATG12-ATG5 and ATG16L1 (400 kDa); this complex interacts with ATG3 leading to disruption of ATG7 interaction and promotion of ATG8-like proteins lipidation. Forms an 800-kDa complex composed of ATG12-ATG5 and ATG16L2. The ATG12-ATG5 conjugate interacts with RAB33A; this interaction is bridged by ATG16L1 and promotes ATG12-ATG5-ATG16L1 complex recruitment to phagophores. Interacts with TECPR1; the interaction is direct and does not take place when ATG16L1 is associated with the ATG5-ATG12 conjugate. Interacts with DHX58/RIG-1, IFIH1/MDA5 and MAVS/IPS-1 in monomeric form as well as in ATG12-ATG5 conjugate form. The interaction with MAVS is further enhanced upon vesicular stomatitis virus (VSV) infection. Interacts with ATG3. Interacts with ATG7 and ATG10. Interacts with FADD. Interacts with Bassoon/BSN; this interaction is important for the regulation of presynaptic autophagy. Interacts with ATG16L2. In terms of processing, conjugated to ATG12; which is essential for autophagy, but is not required for association with isolation membrane. Acetylated by EP300. In terms of tissue distribution, ubiquitous.

It localises to the cytoplasm. It is found in the preautophagosomal structure membrane. In terms of biological role, involved in autophagic vesicle formation. Conjugation with ATG12, through a ubiquitin-like conjugating system involving ATG7 as an E1-like activating enzyme and ATG10 as an E2-like conjugating enzyme, is essential for its function. The ATG12-ATG5 conjugate acts as an E3-like enzyme which is required for lipidation of ATG8 family proteins and their association to the vesicle membranes. Involved in mitochondrial quality control after oxidative damage, and in subsequent cellular longevity. Plays a critical role in multiple aspects of lymphocyte development and is essential for both B and T lymphocyte survival and proliferation. Required for optimal processing and presentation of antigens for MHC II. Involved in the maintenance of axon morphology and membrane structures, as well as in normal adipocyte differentiation. Promotes primary ciliogenesis through removal of OFD1 from centriolar satellites and degradation of IFT20 via the autophagic pathway. As part of the ATG8 conjugation system with ATG12 and ATG16L1, required for recruitment of LRRK2 to stressed lysosomes and induction of LRRK2 kinase activity in response to lysosomal stress. May play an important role in the apoptotic process, possibly within the modified cytoskeleton. Its expression is a relatively late event in the apoptotic process, occurring downstream of caspase activity. Plays a crucial role in IFN-gamma-induced autophagic cell death by interacting with FADD. Functionally, (Microbial infection) May act as a proviral factor. In association with ATG12, negatively regulates the innate antiviral immune response by impairing the type I IFN production pathway upon vesicular stomatitis virus (VSV) infection. This Mus musculus (Mouse) protein is Autophagy protein 5.